Consider the following 139-residue polypeptide: Small ribosomal subunit protein uS11 (139 aa).

Disordered regions lie at residues 1–33 (MPPAKKGPATSARKGQKTRRREKKNVPHGAAHI) and 118–139 (GAISDVTPQPHNGVRPPKRRRV). Over residues 14 to 23 (KGQKTRRREK) the composition is skewed to basic residues.

This sequence belongs to the universal ribosomal protein uS11 family. As to quaternary structure, part of the 30S ribosomal subunit. Interacts with proteins S7 and S18. Binds to IF-3.

In terms of biological role, located on the platform of the 30S subunit, it bridges several disparate RNA helices of the 16S rRNA. Forms part of the Shine-Dalgarno cleft in the 70S ribosome. The polypeptide is Small ribosomal subunit protein uS11 (Mycobacterium tuberculosis (strain ATCC 25177 / H37Ra)).